A 100-amino-acid chain; its full sequence is Large ribosomal subunit protein uL23 (100 aa).

Belongs to the universal ribosomal protein uL23 family. In terms of assembly, part of the 50S ribosomal subunit. Contacts protein L29, and trigger factor when it is bound to the ribosome.

Its function is as follows. One of the early assembly proteins it binds 23S rRNA. One of the proteins that surrounds the polypeptide exit tunnel on the outside of the ribosome. Forms the main docking site for trigger factor binding to the ribosome. The sequence is that of Large ribosomal subunit protein uL23 from Mycobacterium ulcerans (strain Agy99).